The following is a 201-amino-acid chain: Small ribosomal subunit protein uS4c (201 aa).

Residues 17–44 form a disordered region; sequence ALPGLTNKKPRNGSDLRNQSRSGKKSQY. Residues 89–149 enclose the S4 RNA-binding domain; that stretch reads MRLDNILFRL…DEQKSRALIQ (61 aa).

This sequence belongs to the universal ribosomal protein uS4 family. In terms of assembly, part of the 30S ribosomal subunit. Contacts protein S5. The interaction surface between S4 and S5 is involved in control of translational fidelity.

It is found in the plastid. It localises to the chloroplast. Functionally, one of the primary rRNA binding proteins, it binds directly to 16S rRNA where it nucleates assembly of the body of the 30S subunit. Its function is as follows. With S5 and S12 plays an important role in translational accuracy. In Nicotiana sylvestris (Wood tobacco), this protein is Small ribosomal subunit protein uS4c (rps4).